Reading from the N-terminus, the 151-residue chain is Endoribonuclease YbeY (151 aa).

Residues His114, His118, and His124 each contribute to the Zn(2+) site.

It belongs to the endoribonuclease YbeY family. The cofactor is Zn(2+).

The protein localises to the cytoplasm. Single strand-specific metallo-endoribonuclease involved in late-stage 70S ribosome quality control and in maturation of the 3' terminus of the 16S rRNA. This chain is Endoribonuclease YbeY, found in Hamiltonella defensa subsp. Acyrthosiphon pisum (strain 5AT).